The sequence spans 610 residues: DNA mismatch repair protein MutL (610 aa).

Residues 351–406 are disordered; the sequence is GQRPQAPWSAETSPSRPYQPAPAFSERPQASFDGLSTPTARAEPQFSPDPVSPGLA.

This sequence belongs to the DNA mismatch repair MutL/HexB family.

In terms of biological role, this protein is involved in the repair of mismatches in DNA. It is required for dam-dependent methyl-directed DNA mismatch repair. May act as a 'molecular matchmaker', a protein that promotes the formation of a stable complex between two or more DNA-binding proteins in an ATP-dependent manner without itself being part of a final effector complex. The chain is DNA mismatch repair protein MutL from Rhizobium etli (strain ATCC 51251 / DSM 11541 / JCM 21823 / NBRC 15573 / CFN 42).